The chain runs to 213 residues: Large ribosomal subunit protein uL3 (213 aa).

Gln151 is modified (N5-methylglutamine).

It belongs to the universal ribosomal protein uL3 family. Part of the 50S ribosomal subunit. Forms a cluster with proteins L14 and L19. In terms of processing, methylated by PrmB.

In terms of biological role, one of the primary rRNA binding proteins, it binds directly near the 3'-end of the 23S rRNA, where it nucleates assembly of the 50S subunit. This is Large ribosomal subunit protein uL3 from Rhizobium johnstonii (strain DSM 114642 / LMG 32736 / 3841) (Rhizobium leguminosarum bv. viciae).